We begin with the raw amino-acid sequence, 453 residues long: Glutamate--tRNA ligase 2 (453 aa).

The short motif at Pro-10 to Gly-20 is the 'HIGH' region element. A 'KMSKS' region motif is present at residues Lys-232–Arg-236. Lys-235 contacts ATP.

This sequence belongs to the class-I aminoacyl-tRNA synthetase family. Glutamate--tRNA ligase type 1 subfamily. In terms of assembly, monomer.

It localises to the cytoplasm. The enzyme catalyses tRNA(Glu) + L-glutamate + ATP = L-glutamyl-tRNA(Glu) + AMP + diphosphate. Its function is as follows. Catalyzes the attachment of glutamate to tRNA(Glu) in a two-step reaction: glutamate is first activated by ATP to form Glu-AMP and then transferred to the acceptor end of tRNA(Glu). This Wolbachia sp. subsp. Brugia malayi (strain TRS) protein is Glutamate--tRNA ligase 2.